The sequence spans 98 residues: Integration host factor subunit alpha (98 aa).

Over residues 53–69 the composition is skewed to basic and acidic residues; the sequence is DLREKSERPGRNPKTGE. A disordered region spans residues 53–73; sequence DLREKSERPGRNPKTGEDIPI.

Belongs to the bacterial histone-like protein family. In terms of assembly, heterodimer of an alpha and a beta chain.

This protein is one of the two subunits of integration host factor, a specific DNA-binding protein that functions in genetic recombination as well as in transcriptional and translational control. The chain is Integration host factor subunit alpha from Aliivibrio fischeri (strain ATCC 700601 / ES114) (Vibrio fischeri).